Here is a 531-residue protein sequence, read N- to C-terminus: Jacalin-related lectin 16 (531 aa).

4 consecutive Jacalin-type lectin domains span residues 1–87, 90–232, 235–378, and 385–528; these read MDRS…YFTW, PTKM…YFTT, LISL…YFRP, and TEKV…NVLP.

The protein belongs to the jacalin lectin family.

The chain is Jacalin-related lectin 16 (JAL16) from Arabidopsis thaliana (Mouse-ear cress).